A 474-amino-acid chain; its full sequence is ATP synthase subunit beta (474 aa).

An ATP-binding site is contributed by glycine 151–threonine 158.

The protein belongs to the ATPase alpha/beta chains family. In terms of assembly, F-type ATPases have 2 components, CF(1) - the catalytic core - and CF(0) - the membrane proton channel. CF(1) has five subunits: alpha(3), beta(3), gamma(1), delta(1), epsilon(1). CF(0) has three main subunits: a(1), b(2) and c(9-12). The alpha and beta chains form an alternating ring which encloses part of the gamma chain. CF(1) is attached to CF(0) by a central stalk formed by the gamma and epsilon chains, while a peripheral stalk is formed by the delta and b chains.

Its subcellular location is the cell inner membrane. The catalysed reaction is ATP + H2O + 4 H(+)(in) = ADP + phosphate + 5 H(+)(out). Functionally, produces ATP from ADP in the presence of a proton gradient across the membrane. The catalytic sites are hosted primarily by the beta subunits. The protein is ATP synthase subunit beta of Paracoccus denitrificans (strain Pd 1222).